The chain runs to 274 residues: Thiazole synthase (274 aa).

K115 (schiff-base intermediate with DXP) is an active-site residue. Residues G176, 202-203 (AG), and 224-225 (NS) contribute to the 1-deoxy-D-xylulose 5-phosphate site.

This sequence belongs to the ThiG family. As to quaternary structure, homotetramer. Forms heterodimers with either ThiH or ThiS.

The protein localises to the cytoplasm. It catalyses the reaction [ThiS sulfur-carrier protein]-C-terminal-Gly-aminoethanethioate + 2-iminoacetate + 1-deoxy-D-xylulose 5-phosphate = [ThiS sulfur-carrier protein]-C-terminal Gly-Gly + 2-[(2R,5Z)-2-carboxy-4-methylthiazol-5(2H)-ylidene]ethyl phosphate + 2 H2O + H(+). It functions in the pathway cofactor biosynthesis; thiamine diphosphate biosynthesis. In terms of biological role, catalyzes the rearrangement of 1-deoxy-D-xylulose 5-phosphate (DXP) to produce the thiazole phosphate moiety of thiamine. Sulfur is provided by the thiocarboxylate moiety of the carrier protein ThiS. In vitro, sulfur can be provided by H(2)S. This is Thiazole synthase from Parasynechococcus marenigrum (strain WH8102).